The chain runs to 329 residues: Glycosyltransferase family protein 64 C3 (329 aa).

Residues 1–27 form the signal peptide; sequence MGVKSVRFSIWFLFVVTDLVFCRTLSG. N-linked (GlcNAc...) asparagine glycosylation is present at asparagine 99. Substrate-binding positions include 118–123, 139–141, arginine 169, 226–230, and 271–284; these read SSLNAR, DDD, RNCED, and VGLSSRRVEHRKRR. Aspartate 141 contributes to the Mn(2+) binding site. Cysteine 228 and cysteine 287 are oxidised to a cystine. Residue aspartate 230 is part of the active site. Residues 268–284 are substrate binding; sequence VRDVGLSSRRVEHRKRR.

It belongs to the glycosyltransferase 64 family. It depends on Mn(2+) as a cofactor.

Its pathway is protein modification; protein glycosylation. Functionally, probable glycosyltransferase. This is Glycosyltransferase family protein 64 C3 from Arabidopsis thaliana (Mouse-ear cress).